The primary structure comprises 535 residues: Succinate-semialdehyde dehydrogenase, mitochondrial (535 aa).

A mitochondrion-targeting transit peptide spans 1–47 (MATCFWLRSCGARRLGSTFPGCRLRPRAGGLVPASGPAPGPAQLRCY). K126 is subject to N6-acetyllysine; alternate. The residue at position 126 (K126) is an N6-succinyllysine; alternate. Residues K135 and K184 each carry the N6-succinyllysine modification. NAD(+)-binding positions include R213 and 228-231 (KPAE). Residue R213 participates in substrate binding. Position 265 is an N6-acetyllysine; alternate (K265). An N6-succinyllysine; alternate modification is found at K265. Residue 284-289 (GSTTTG) participates in NAD(+) binding. E306 acts as the Proton acceptor in catalysis. A substrate-binding site is contributed by R334. Residue C340 is the Nucleophile of the active site. A disulfide bond links C340 and C342. At K365 the chain carries N6-acetyllysine. K402 is modified (N6-succinyllysine). An N6-acetyllysine modification is found at K411. Substrate is bound at residue S498. S499 bears the Phosphoserine mark.

It belongs to the aldehyde dehydrogenase family. In terms of assembly, homotetramer.

The protein localises to the mitochondrion. It carries out the reaction succinate semialdehyde + NAD(+) + H2O = succinate + NADH + 2 H(+). Its pathway is amino-acid degradation; 4-aminobutanoate degradation. With respect to regulation, redox-regulated. Inhibited under oxydizing conditions. Catalyzes one step in the degradation of the inhibitory neurotransmitter gamma-aminobutyric acid (GABA). This chain is Succinate-semialdehyde dehydrogenase, mitochondrial (ALDH5A1), found in Hylobates lar (Lar gibbon).